Consider the following 229-residue polypeptide: Acidic leucine-rich nuclear phosphoprotein 32-related protein 1 (229 aa).

LRR repeat units lie at residues threonine 19–leucine 40, asparagine 42–proline 63, alanine 64–valine 85, and aspartate 90–lysine 110. One can recognise an LRRCT domain in the interval proline 124–glycine 164. Positions glutamate 155–glycine 177 are enriched in acidic residues. The interval glutamate 155 to glutamate 229 is disordered. The segment covering proline 219–glutamate 229 has biased composition (basic and acidic residues).

This sequence belongs to the ANP32 family.

This Caenorhabditis elegans protein is Acidic leucine-rich nuclear phosphoprotein 32-related protein 1.